We begin with the raw amino-acid sequence, 231 residues long: Phycobilisome rod-core linker polypeptide cpcG (231 aa).

A PBS-linker domain is found at 11–191 (STQNQRVDGY…PRYGADFKEK (181 aa)).

Belongs to the phycobilisome linker protein family. The phycobilisome is a hemidiscoidal structure that is composed of two distinct substructures: a core complex and a number of rods radiating from the core.

It localises to the plastid. Its subcellular location is the chloroplast. It is found in the chloroplast thylakoid membrane. Its function is as follows. Rod-core linker protein required for attachment of phycocyanin to allophycocyanin in cores of phycobilisomes. In terms of biological role, linker polypeptides determine the state of aggregation and the location of the disk-shaped phycobiliprotein units within the phycobilisome and modulate their spectroscopic properties in order to mediate a directed and optimal energy transfer. This chain is Phycobilisome rod-core linker polypeptide cpcG (cpcG), found in Porphyra purpurea (Red seaweed).